The following is a 403-amino-acid chain: Multifunctional CCA protein (403 aa).

ATP contacts are provided by G8 and R11. CTP is bound by residues G8 and R11. Positions 21 and 23 each coordinate Mg(2+). Residues R91, R137, and R140 each coordinate ATP. CTP is bound by residues R91, R137, and R140. An HD domain is found at 228–329 (TGIHTLMVAK…LKVLGLLDVW (102 aa)).

The protein belongs to the tRNA nucleotidyltransferase/poly(A) polymerase family. Bacterial CCA-adding enzyme type 1 subfamily. Monomer. Can also form homodimers and oligomers. The cofactor is Mg(2+). Ni(2+) serves as cofactor.

The enzyme catalyses a tRNA precursor + 2 CTP + ATP = a tRNA with a 3' CCA end + 3 diphosphate. The catalysed reaction is a tRNA with a 3' CCA end + 2 CTP + ATP = a tRNA with a 3' CCACCA end + 3 diphosphate. Functionally, catalyzes the addition and repair of the essential 3'-terminal CCA sequence in tRNAs without using a nucleic acid template. Adds these three nucleotides in the order of C, C, and A to the tRNA nucleotide-73, using CTP and ATP as substrates and producing inorganic pyrophosphate. tRNA 3'-terminal CCA addition is required both for tRNA processing and repair. Also involved in tRNA surveillance by mediating tandem CCA addition to generate a CCACCA at the 3' terminus of unstable tRNAs. While stable tRNAs receive only 3'-terminal CCA, unstable tRNAs are marked with CCACCA and rapidly degraded. The chain is Multifunctional CCA protein from Vibrio cholerae serotype O1 (strain ATCC 39541 / Classical Ogawa 395 / O395).